A 355-amino-acid polypeptide reads, in one-letter code: Tetraacyldisaccharide 4'-kinase (355 aa).

49 to 56 (TAGGTGKT) contacts ATP.

Belongs to the LpxK family.

It carries out the reaction a lipid A disaccharide + ATP = a lipid IVA + ADP + H(+). It participates in glycolipid biosynthesis; lipid IV(A) biosynthesis; lipid IV(A) from (3R)-3-hydroxytetradecanoyl-[acyl-carrier-protein] and UDP-N-acetyl-alpha-D-glucosamine: step 6/6. In terms of biological role, transfers the gamma-phosphate of ATP to the 4'-position of a tetraacyldisaccharide 1-phosphate intermediate (termed DS-1-P) to form tetraacyldisaccharide 1,4'-bis-phosphate (lipid IVA). The sequence is that of Tetraacyldisaccharide 4'-kinase from Chlorobium luteolum (strain DSM 273 / BCRC 81028 / 2530) (Pelodictyon luteolum).